The sequence spans 380 residues: Cytochrome b (380 aa).

4 helical membrane passes run 34-54 (FGSL…LLAT), 78-99 (WLIR…YLHI), 114-134 (WNTG…GYVL), and 179-199 (FFAL…IHLT). Heme b is bound by residues histidine 84 and histidine 98. Residues histidine 183 and histidine 197 each coordinate heme b. Histidine 202 provides a ligand contact to a ubiquinone. The next 4 membrane-spanning stretches (helical) occupy residues 227 to 247 (LKDI…ALFS), 289 to 309 (LGGV…PLLH), 321 to 341 (LSQL…WVGS), and 348 to 368 (FIII…LLFP).

The protein belongs to the cytochrome b family. In terms of assembly, the cytochrome bc1 complex contains 11 subunits: 3 respiratory subunits (MT-CYB, CYC1 and UQCRFS1), 2 core proteins (UQCRC1 and UQCRC2) and 6 low-molecular weight proteins (UQCRH/QCR6, UQCRB/QCR7, UQCRQ/QCR8, UQCR10/QCR9, UQCR11/QCR10 and a cleavage product of UQCRFS1). This cytochrome bc1 complex then forms a dimer. Requires heme b as cofactor.

The protein localises to the mitochondrion inner membrane. Component of the ubiquinol-cytochrome c reductase complex (complex III or cytochrome b-c1 complex) that is part of the mitochondrial respiratory chain. The b-c1 complex mediates electron transfer from ubiquinol to cytochrome c. Contributes to the generation of a proton gradient across the mitochondrial membrane that is then used for ATP synthesis. In Uria aalge (Common mure), this protein is Cytochrome b (MT-CYB).